Here is a 673-residue protein sequence, read N- to C-terminus: Hemocyanin subunit C (673 aa).

The signal sequence occupies residues 1 to 20 (MGAWKVWTFFAIALVVAVKA). Positions 207, 211, and 237 each coordinate Cu cation. Asn-323 carries an N-linked (GlcNAc...) asparagine glycan. His-358, His-362, and His-398 together coordinate Cu cation. Cys-568 and Cys-616 are oxidised to a cystine.

The protein belongs to the tyrosinase family. Hemocyanin subfamily. In terms of assembly, 36-chain polymer consisting of 6 hexamers, each of which includes 4 different chains, A, B, C and D. As to expression, hemolymph.

It localises to the secreted. The protein localises to the extracellular space. Its function is as follows. Hemocyanins are copper-containing oxygen carriers occurring freely dissolved in the hemolymph of many mollusks and arthropods. This Scutigera coleoptrata (House centipede) protein is Hemocyanin subunit C (HCC).